The chain runs to 921 residues: Retinoblastoma-associated protein (921 aa).

A disordered region spans residues 1–36 (MPPKAPRRAAAAEPPPPPPPPPREDDPAQDSGPEEL). N,N-dimethylproline; by NTM1 is present on P2. 2 positions are modified to phosphoserine: S31 and S243. Phosphothreonine is present on residues T246, T350, T364, and T367. Residues 341 to 360 (PIDSFETERTPRKNNPDEEA) are disordered. The span at 346–356 (ETERTPRKNNP) shows a compositional bias: basic and acidic residues. Positions 367–573 (TPVRTVMNTI…FDLIKQSKDG (207 aa)) are domain A. Positions 367–764 (TPVRTVMNTI…QRLKTNILQY (398 aa)) are pocket; binds T and E1A. Position 561 is a phosphoserine; by CDK2 (S561). Positions 574–632 (EGPDNLEPACPLSLPLQGNHTAADMYLSPLRSPKKRTSTTRVNSAANTETQAASAFHTQ) are spacer. A phosphoserine mark is found at S601, S605, and S617. The interval 633 to 764 (KPLKSTSLAL…QRLKTNILQY (132 aa)) is domain B. Positions 756-921 (RLKTNILQYA…SKDVSNKEEK (166 aa)) are interaction with LIMD1. The interval 764–921 (YASTRPPTLS…SKDVSNKEEK (158 aa)) is domain; mediates interaction with E4F1. A phosphoserine mark is found at S773, S781, S788, and S800. At K803 the chain carries N6-methyllysine; by SMYD2. S804 is subject to Phosphoserine. T814, T816, T819, and T834 each carry phosphothreonine. S848 is subject to Phosphoserine. K853 is subject to N6-methyllysine; by SMYD2. The Bipartite nuclear localization signal motif lies at 853 to 869 (KRSAEGGNPPKPLKKLR). N6-acetyllysine; by PCAF is present on residues K866 and K867. Residues 872–921 (IEGADEADGSKHLPAESKFQQKLAEMTSTRTRMQKQRMNESKDVSNKEEK) are disordered. Basic and acidic residues predominate over residues 908 to 921 (RMNESKDVSNKEEK).

It belongs to the retinoblastoma protein (RB) family. The hypophosphorylated form interacts with and sequesters the E2F1 transcription factor, thereby inhibiting E2F1 transcription. Interacts with heterodimeric E2F/DP transcription factor complexes containing TFDP1 and either E2F1/E2F, E2F3, E2F4 or E2F5, or TFDP2 and E2F4. Interacts (when hyperphosphorylated and hypophosphorylated) with PKP3; the interaction inhibits RB1 interaction with and repression of the transcription factor E2F1, potentially via sequestering RB1 to the cytoplasm. The unphosphorylated form interacts with EID1, ARID3B, KDM5A, SUV39H1, MJD2A/JHDM3A and THOC1. Interacts with the N-terminal domain of TAF1. Interacts with SNW1, ATAD5, AATF, DNMT1, LIN9, LMNA, KMT5B, KMT5C, PELP1, UHRF2, TMPO-alpha and USP4. Interacts with GRIP1 and UBR4. Interacts with ARID4A and KDM5B. Interacts with E4F1 and LIMD1. Interacts with SMARCA4/BRG1 and HDAC1. Interacts with USP4. Interacts (when methylated at Lys-853) with L3MBTL1. Binds to CDK1 and CDK2. Interacts with CHEK2; phosphorylates RB1. Interacts with PRMT2. Interacts with CEBPA. P-TEFB complex interacts with RB1; promotes phosphorylation of RB1. Interacts with RBBP9; the interaction disrupts RB1 binding to E2F1. Interacts with KAT2B/PCAF and EP300/P300. Interacts with PAX5. Interacts (phosphorylated and unphosphorylated) with BLCAP. May interact with NDC80. In terms of assembly, (Microbial infection) Interacts with adenovirus E1a protein. As to quaternary structure, (Microbial infection) Interacts with SV40 large T antigen. Phosphorylated. Phosphorylated by CDK6 and CDK4, and subsequently by CDK2 at Ser-561 in G1, thereby releasing E2F1 which is then able to activate cell growth. Dephosphorylated at the late M phase. Phosphorylation of threonine residues in domain C promotes interaction between the C-terminal domain C and the Pocket domain, and thereby inhibits interactions with heterodimeric E2F/DP transcription factor complexes. Dephosphorylated at Ser-788 by calcineruin upon calcium stimulation. CDK3/cyclin-C-mediated phosphorylation at Ser-800 and Ser-804 is required for G0-G1 transition. Phosphorylated by CDK1 and CDK2 upon TGFB1-mediated apoptosis. Post-translationally, monomethylation at Lys-803 by SMYD2 enhances phosphorylation at Ser-800 and Ser-804, and promotes cell cycle progression. Monomethylation at Lys-853 by SMYD2 promotes interaction with L3MBTL1. N-terminus is methylated by METTL11A/NTM1. In terms of processing, acetylated in the skin. Acetylation at Lys-866 and Lys-867 regulates subcellular localization during keratinocytes differentiation. As to expression, expressed in the cell nuclei of renal tubules, hepatocytes and skeletal muscles. Expressed in skin (at protein level).

It is found in the nucleus. The protein localises to the cytoplasm. Tumor suppressor that is a key regulator of the G1/S transition of the cell cycle. The hypophosphorylated form binds transcription regulators of the E2F family, preventing transcription of E2F-responsive genes. Both physically blocks E2Fs transactivating domain and recruits chromatin-modifying enzymes that actively repress transcription. Cyclin and CDK-dependent phosphorylation of RB1 induces its dissociation from E2Fs, thereby activating transcription of E2F responsive genes and triggering entry into S phase. RB1 also promotes the G0-G1 transition upon phosphorylation and activation by CDK3/cyclin-C. Directly involved in heterochromatin formation by maintaining overall chromatin structure and, in particular, that of constitutive heterochromatin by stabilizing histone methylation. Recruits and targets histone methyltransferases SUV39H1, KMT5B and KMT5C, leading to epigenetic transcriptional repression. Controls histone H4 'Lys-20' trimethylation. Inhibits the intrinsic kinase activity of TAF1. Mediates transcriptional repression by SMARCA4/BRG1 by recruiting a histone deacetylase (HDAC) complex to the c-FOS promoter. In resting neurons, transcription of the c-FOS promoter is inhibited by BRG1-dependent recruitment of a phospho-RB1-HDAC1 repressor complex. Upon calcium influx, RB1 is dephosphorylated by calcineurin, which leads to release of the repressor complex. The protein is Retinoblastoma-associated protein (Rb1) of Mus musculus (Mouse).